The sequence spans 151 residues: SsrA-binding protein (151 aa).

It belongs to the SmpB family.

Its subcellular location is the cytoplasm. Functionally, required for rescue of stalled ribosomes mediated by trans-translation. Binds to transfer-messenger RNA (tmRNA), required for stable association of tmRNA with ribosomes. tmRNA and SmpB together mimic tRNA shape, replacing the anticodon stem-loop with SmpB. tmRNA is encoded by the ssrA gene; the 2 termini fold to resemble tRNA(Ala) and it encodes a 'tag peptide', a short internal open reading frame. During trans-translation Ala-aminoacylated tmRNA acts like a tRNA, entering the A-site of stalled ribosomes, displacing the stalled mRNA. The ribosome then switches to translate the ORF on the tmRNA; the nascent peptide is terminated with the 'tag peptide' encoded by the tmRNA and targeted for degradation. The ribosome is freed to recommence translation, which seems to be the essential function of trans-translation. The chain is SsrA-binding protein from Campylobacter fetus subsp. fetus (strain 82-40).